Consider the following 557-residue polypeptide: GMP synthase [glutamine-hydrolyzing] (557 aa).

One can recognise a Glutamine amidotransferase type-1 domain in the interval 13 to 209 (TILTLDFGSQ…AVDICGANPN (197 aa)). Cys89 (nucleophile) is an active-site residue. Active-site residues include His183 and Glu185. The GMPS ATP-PPase domain maps to 210-414 (WTMSKFVDQE…LGIAHELVMR (205 aa)). An ATP-binding site is contributed by 238–244 (SGGVDST). The XMP site is built by Arg311, Asp476, Lys549, and Glu555.

As to quaternary structure, homodimer. Mg(2+) is required as a cofactor.

Its subcellular location is the cytoplasm. The protein resides in the cytosol. It carries out the reaction XMP + L-glutamine + ATP + H2O = GMP + L-glutamate + AMP + diphosphate + 2 H(+). Its pathway is purine metabolism; GMP biosynthesis; GMP from XMP (L-Gln route): step 1/1. Its activity is regulated as follows. Inhibited by 6-diazo-5-oxo-l-norleucine (DON) and acivicin (ACI). Catalyzes the conversion of xanthine monophosphate (XMP) to GMP in the presence of glutamine and ATP through an adenyl-XMP intermediate. The chain is GMP synthase [glutamine-hydrolyzing] (gua1) from Aspergillus fumigatus (strain ATCC MYA-4609 / CBS 101355 / FGSC A1100 / Af293) (Neosartorya fumigata).